The following is a 122-amino-acid chain: Large ribosomal subunit protein uL14 (122 aa).

This sequence belongs to the universal ribosomal protein uL14 family. In terms of assembly, part of the 50S ribosomal subunit. Forms a cluster with proteins L3 and L19. In the 70S ribosome, L14 and L19 interact and together make contacts with the 16S rRNA in bridges B5 and B8.

Binds to 23S rRNA. Forms part of two intersubunit bridges in the 70S ribosome. The sequence is that of Large ribosomal subunit protein uL14 from Burkholderia multivorans (strain ATCC 17616 / 249).